A 300-amino-acid chain; its full sequence is ETS homologous factor (300 aa).

One can recognise a PNT domain in the interval 29-115 (STCNVSSGFF…SNLQHLKWNG (87 aa)). A disordered region spans residues 183 to 202 (ESPDMKKEQDPPAKCHTKKH). Basic and acidic residues predominate over residues 185–195 (PDMKKEQDPPA). A DNA-binding region (ETS) is located at residues 207-289 (THLWEFIRDI…DGRRLVYKFG (83 aa)).

This sequence belongs to the ETS family.

It localises to the nucleus. In terms of biological role, transcriptional activator that may play a role in regulating epithelial cell differentiation and proliferation. May act as a repressor for a specific subset of ETS/AP-1-responsive genes, and as a modulator of the nuclear response to mitogen-activated protein kinase signaling cascades. Binds to DNA sequences containing the consensus nucleotide core sequence GGAA. Involved in regulation of TNFRSF10B/DR5 expression through Ets-binding sequences on the TNFRSF10B/DR5 promoter. The chain is ETS homologous factor (EHF) from Pan troglodytes (Chimpanzee).